The primary structure comprises 380 residues: Alcohol dehydrogenase 2 (380 aa).

Residues C48, T50, H70, C100, C103, C106, C114, and C178 each coordinate Zn(2+). An alcohol-binding residues include T50 and H70. Position 50 (T50) interacts with NAD(+). Residues 203 to 208, D227, R232, T273, V296, 296 to 298, F323, and R373 each bind NAD(+); these read GLGAVG and VGV.

Belongs to the zinc-containing alcohol dehydrogenase family. Homodimer. Homotetramer. Zn(2+) is required as a cofactor.

The protein localises to the cytoplasm. It carries out the reaction a primary alcohol + NAD(+) = an aldehyde + NADH + H(+). It catalyses the reaction a secondary alcohol + NAD(+) = a ketone + NADH + H(+). The protein is Alcohol dehydrogenase 2 (ADH2) of Solanum tuberosum (Potato).